The chain runs to 579 residues: Adenine/guanine permease AZG1 (579 aa).

A run of 12 helical transmembrane segments spans residues 52-72 (AGTATFLTMAYILAVNASILS), 131-151 (LIVATVAASLIGCVIMGLMAN), 183-203 (TALAAVFIEGLIFLFISAIGF), 221-241 (AGIGLFLAFIGLQNNQGIGLV), 260-280 (ISLAPVITSANGTVSLLAGGS), 292-312 (MESPTFWLGIVGFVIIAYCLV), 320-340 (IYGIVFVTAVSWFRNTEVTAF), 379-399 (FWEALVTFLYVDILDTTGTLY), 414-434 (FAGQYFAFMSDASAIVIGSLL), 459-479 (AITVAVYFLLAMFFTPLLASI), 480-500 (PAWAVGPPLILVGVMMMKSVT), and 514-534 (FVTMILMPLTYSVAYGLIGGI).

It belongs to the nucleobase:cation symporter-2 (NCS2) (TC 2.A.40) family. Azg-like subfamily.

It localises to the membrane. Transports natural purines (adenine and guanine) as well as purine analogs. Confers sensitivity to 8-azaadenine and 8-azaguanine (8-azg). The sequence is that of Adenine/guanine permease AZG1 (AZG1) from Arabidopsis thaliana (Mouse-ear cress).